The primary structure comprises 320 residues: Nucleotide-binding protein Acid_7395 (320 aa).

The disordered stretch occupies residues 1-34; it reads MPLRKKGAATTKAAATRKDSAKAPASSKRKDAPQ. 44–51 contributes to the ATP binding site; sequence GLSGSGKG. 94–97 provides a ligand contact to GTP; that stretch reads DIRE.

This sequence belongs to the RapZ-like family.

In terms of biological role, displays ATPase and GTPase activities. The sequence is that of Nucleotide-binding protein Acid_7395 from Solibacter usitatus (strain Ellin6076).